A 165-amino-acid polypeptide reads, in one-letter code: Large ribosomal subunit protein bL17 (165 aa).

Over residues 138-158 (QEKREAQEKAREEKRTARKSD) the composition is skewed to basic and acidic residues. Positions 138–165 (QEKREAQEKAREEKRTARKSDSVPARKK) are disordered.

The protein belongs to the bacterial ribosomal protein bL17 family. In terms of assembly, part of the 50S ribosomal subunit. Contacts protein L32.

This chain is Large ribosomal subunit protein bL17, found in Leptospira borgpetersenii serovar Hardjo-bovis (strain JB197).